Here is a 168-residue protein sequence, read N- to C-terminus: Endoribonuclease YbeY (168 aa).

Zn(2+) is bound by residues histidine 119, histidine 123, and histidine 129.

This sequence belongs to the endoribonuclease YbeY family. It depends on Zn(2+) as a cofactor.

Its subcellular location is the cytoplasm. Single strand-specific metallo-endoribonuclease involved in late-stage 70S ribosome quality control and in maturation of the 3' terminus of the 16S rRNA. The protein is Endoribonuclease YbeY of Gluconobacter oxydans (strain 621H) (Gluconobacter suboxydans).